A 493-amino-acid polypeptide reads, in one-letter code: Glutamyl-tRNA(Gln) amidotransferase subunit A (493 aa).

Residues Lys-78 and Ser-158 each act as charge relay system in the active site. The active-site Acyl-ester intermediate is Ser-182.

It belongs to the amidase family. GatA subfamily. In terms of assembly, heterotrimer of A, B and C subunits.

The enzyme catalyses L-glutamyl-tRNA(Gln) + L-glutamine + ATP + H2O = L-glutaminyl-tRNA(Gln) + L-glutamate + ADP + phosphate + H(+). Allows the formation of correctly charged Gln-tRNA(Gln) through the transamidation of misacylated Glu-tRNA(Gln) in organisms which lack glutaminyl-tRNA synthetase. The reaction takes place in the presence of glutamine and ATP through an activated gamma-phospho-Glu-tRNA(Gln). The protein is Glutamyl-tRNA(Gln) amidotransferase subunit A of Azorhizobium caulinodans (strain ATCC 43989 / DSM 5975 / JCM 20966 / LMG 6465 / NBRC 14845 / NCIMB 13405 / ORS 571).